A 471-amino-acid polypeptide reads, in one-letter code: UDP-N-acetylmuramate--L-alanine ligase (471 aa).

114-120 (GTHGKTT) is a binding site for ATP.

It belongs to the MurCDEF family.

The protein localises to the cytoplasm. The catalysed reaction is UDP-N-acetyl-alpha-D-muramate + L-alanine + ATP = UDP-N-acetyl-alpha-D-muramoyl-L-alanine + ADP + phosphate + H(+). It functions in the pathway cell wall biogenesis; peptidoglycan biosynthesis. Functionally, cell wall formation. This Sinorhizobium medicae (strain WSM419) (Ensifer medicae) protein is UDP-N-acetylmuramate--L-alanine ligase.